The chain runs to 409 residues: Peptidase T (409 aa).

His78 serves as a coordination point for Zn(2+). Asp80 is a catalytic residue. A Zn(2+)-binding site is contributed by Asp140. Glu173 serves as the catalytic Proton acceptor. Zn(2+) contacts are provided by Glu174, Asp196, and His379.

This sequence belongs to the peptidase M20B family. Requires Zn(2+) as cofactor.

It is found in the cytoplasm. The enzyme catalyses Release of the N-terminal residue from a tripeptide.. Functionally, cleaves the N-terminal amino acid of tripeptides. The polypeptide is Peptidase T (Salmonella enteritidis PT4 (strain P125109)).